Consider the following 488-residue polypeptide: Ribulose bisphosphate carboxylase large chain (488 aa).

Substrate-binding residues include Asn-127 and Thr-177. The active-site Proton acceptor is the Lys-179. Substrate is bound at residue Lys-181. Positions 205, 207, and 208 each coordinate Mg(2+). Position 205 is an N6-carboxylysine (Lys-205). The active-site Proton acceptor is the His-297. Positions 298, 330, and 382 each coordinate substrate.

It belongs to the RuBisCO large chain family. Type I subfamily. As to quaternary structure, heterohexadecamer of 8 large chains and 8 small chains. It depends on Mg(2+) as a cofactor.

Its subcellular location is the plastid. The protein resides in the chloroplast. The enzyme catalyses 2 (2R)-3-phosphoglycerate + 2 H(+) = D-ribulose 1,5-bisphosphate + CO2 + H2O. The catalysed reaction is D-ribulose 1,5-bisphosphate + O2 = 2-phosphoglycolate + (2R)-3-phosphoglycerate + 2 H(+). Functionally, ruBisCO catalyzes two reactions: the carboxylation of D-ribulose 1,5-bisphosphate, the primary event in carbon dioxide fixation, as well as the oxidative fragmentation of the pentose substrate in the photorespiration process. Both reactions occur simultaneously and in competition at the same active site. The polypeptide is Ribulose bisphosphate carboxylase large chain (Pyropia suborbiculata (Red alga)).